Consider the following 256-residue polypeptide: Nuclear shuttle protein (256 aa).

Positions 18–50 are disordered; the sequence is VSRNQSSKRGTFVRRTDGKRRKGPSSKAHDEPK. The short motif at 21-42 is the Bipartite nuclear localization signal element; that stretch reads NQSSKRGTFVRRTDGKRRKGPS. The Nuclear localization signal signature appears at 81–96; it reads VLGKIEPNRSRSYIKL. An interaction with Arabidopsis thaliana NSI protein region spans residues 150–187; sequence EIFGARIHSHGNLAITPGLKDRYYVLHVLKRVLSVEKD.

This sequence belongs to the begomovirus nuclear shuttle protein family. In terms of assembly, binds to single-stranded and double-stranded viral DNA. Interacts with the host nuclear shuttle interacting (NSI) protein. This interaction may allow NSP to recruit NSI monomers to the viral genome and thus regulate nuclear export of viral genome by NSP.

It localises to the host nucleus. The protein localises to the host cytoplasm. It is found in the host cell membrane. In terms of biological role, binds to the genomic viral ssDNA, shuttles it into and out of the cell nucleus. Begomoviruses use 2 proteins to transport their DNA from cell to cell. The nuclear shuttle protein (NSP) shuttles it between nucleus and cytoplasm and the movement protein (MP) probably transports the DNA-NSP complex to the cell periphery and facilitates movement across the cell wall. This Brassica oleracea (Wild cabbage) protein is Nuclear shuttle protein.